A 549-amino-acid polypeptide reads, in one-letter code: Glucose-6-phosphate isomerase (549 aa).

N6-acetyllysine occurs at positions 80, 228, and 234. The Proton donor role is filled by Glu355. Residues His386 and Lys514 contribute to the active site.

The protein belongs to the GPI family.

Its subcellular location is the cytoplasm. The enzyme catalyses alpha-D-glucose 6-phosphate = beta-D-fructose 6-phosphate. Its pathway is carbohydrate biosynthesis; gluconeogenesis. It functions in the pathway carbohydrate degradation; glycolysis; D-glyceraldehyde 3-phosphate and glycerone phosphate from D-glucose: step 2/4. Functionally, catalyzes the reversible isomerization of glucose-6-phosphate to fructose-6-phosphate. This is Glucose-6-phosphate isomerase from Shigella flexneri serotype 5b (strain 8401).